We begin with the raw amino-acid sequence, 267 residues long: Cilia- and flagella-associated protein 300 (267 aa).

Belongs to the CFAP300 family.

The protein resides in the cytoplasm. It is found in the cytoskeleton. It localises to the cilium axoneme. In terms of biological role, cilium- and flagellum-specific protein that plays a role in axonemal structure organization and motility. May play a role in outer and inner dynein arm assembly. The chain is Cilia- and flagella-associated protein 300 from Xenopus tropicalis (Western clawed frog).